Reading from the N-terminus, the 416-residue chain is Tryptophan synthase beta chain (416 aa).

The tract at residues 1 to 23 (MTSTLPSQPKDMELANSSRPSVH) is disordered. Lys-109 carries the N6-(pyridoxal phosphate)lysine modification.

The protein belongs to the TrpB family. Tetramer of two alpha and two beta chains. Requires pyridoxal 5'-phosphate as cofactor.

It carries out the reaction (1S,2R)-1-C-(indol-3-yl)glycerol 3-phosphate + L-serine = D-glyceraldehyde 3-phosphate + L-tryptophan + H2O. The protein operates within amino-acid biosynthesis; L-tryptophan biosynthesis; L-tryptophan from chorismate: step 5/5. Its function is as follows. The beta subunit is responsible for the synthesis of L-tryptophan from indole and L-serine. The sequence is that of Tryptophan synthase beta chain from Prochlorococcus marinus (strain MIT 9211).